The following is a 621-amino-acid chain: Chaperone protein HtpG (621 aa).

The segment at 1-341 is a; substrate-binding; sequence MSNQEYTFQT…SEDLPLNVSR (341 aa). Residues 342–547 form a b region; sequence EILQQNKILA…GDEQNAMMAN (206 aa). The interval 548–621 is c; that stretch reads WMRQMGQSVP…RLNSVLLKAL (74 aa).

Belongs to the heat shock protein 90 family. In terms of assembly, homodimer.

The protein localises to the cytoplasm. In terms of biological role, molecular chaperone. Has ATPase activity. This chain is Chaperone protein HtpG, found in Helicobacter pylori (strain ATCC 700392 / 26695) (Campylobacter pylori).